The sequence spans 295 residues: Ribose-phosphate pyrophosphokinase (295 aa).

ATP is bound by residues 46-48 and 101-102; these read DGE and RQ. 2 residues coordinate Mg(2+): His-132 and Asp-171. Residue Lys-194 is part of the active site. D-ribose 5-phosphate is bound by residues Arg-196 and Asp-220.

The protein belongs to the ribose-phosphate pyrophosphokinase family. Class III (archaeal) subfamily. The cofactor is Mg(2+).

It localises to the cytoplasm. It catalyses the reaction D-ribose 5-phosphate + ATP = 5-phospho-alpha-D-ribose 1-diphosphate + AMP + H(+). It participates in metabolic intermediate biosynthesis; 5-phospho-alpha-D-ribose 1-diphosphate biosynthesis; 5-phospho-alpha-D-ribose 1-diphosphate from D-ribose 5-phosphate (route I): step 1/1. Involved in the biosynthesis of the central metabolite phospho-alpha-D-ribosyl-1-pyrophosphate (PRPP) via the transfer of pyrophosphoryl group from ATP to 1-hydroxyl of ribose-5-phosphate (Rib-5-P). The sequence is that of Ribose-phosphate pyrophosphokinase from Methanosarcina mazei (strain ATCC BAA-159 / DSM 3647 / Goe1 / Go1 / JCM 11833 / OCM 88) (Methanosarcina frisia).